Here is a 196-residue protein sequence, read N- to C-terminus: Thymidine kinase (196 aa).

Residue 17-24 (GPMFAGKT) coordinates ATP. Residue E92 is the Proton acceptor of the active site. F121 lines the substrate pocket. Zn(2+) is bound by residues C146 and C149. 166 to 170 (LILAG) is a binding site for substrate. Zn(2+)-binding residues include C179 and C182.

The protein belongs to the thymidine kinase family.

The enzyme catalyses thymidine + ATP = dTMP + ADP + H(+). Its function is as follows. Phosphorylates thymidine. ASFV replicates in the cytoplasm of infected cells and contains genes encoding a number of enzymes needed for DNA synthesis, including thymidine kinase. Important for growth in swine macrophages in vitro and is a virus virulence factor in swine. The protein is Thymidine kinase of African swine fever virus (strain Badajoz 1971 Vero-adapted) (Ba71V).